Here is a 195-residue protein sequence, read N- to C-terminus: IMP cyclohydrolase (195 aa).

It belongs to the archaeal IMP cyclohydrolase family.

The enzyme catalyses IMP + H2O = 5-formamido-1-(5-phospho-D-ribosyl)imidazole-4-carboxamide. It functions in the pathway purine metabolism; IMP biosynthesis via de novo pathway; IMP from 5-formamido-1-(5-phospho-D-ribosyl)imidazole-4-carboxamide: step 1/1. Functionally, catalyzes the cyclization of 5-formylamidoimidazole-4-carboxamide ribonucleotide to IMP. In Haloquadratum walsbyi (strain DSM 16790 / HBSQ001), this protein is IMP cyclohydrolase.